The following is a 288-amino-acid chain: uncharacterized protein (288 aa).

This is an uncharacterized protein from Acanthamoeba polyphaga mimivirus (APMV).